Reading from the N-terminus, the 836-residue chain is Pentatricopeptide repeat-containing protein At2g39620 (836 aa).

23 PPR repeats span residues 1 to 35 (MPIN…GLKP), 36 to 62 (HNQL…VRDP), 63 to 98 (GVVL…GIDP), 99 to 133 (DKYS…GLES), 134 to 164 (DVYI…MHVK), 165 to 199 (DVVT…CVDI), 200 to 230 (DHVS…VIKK), 233 to 263 (IFAF…VWRK), 264 to 298 (DESS…DVRM), 299 to 333 (NKVA…GLIG), 334 to 364 (DVSV…IEDR), 365 to 399 (DVVS…HIKP), 400 to 434 (NAVT…DIES), 435 to 465 (ELET…LPIK), 466 to 500 (DAVA…GVCP), 501 to 535 (DSRT…GFDS), 536 to 566 (ECHV…CGFE), 568 to 602 (STVS…KFQP), 603 to 637 (NAVT…GFCS), 638 to 668 (QTPV…ISNK), 669 to 703 (YIVS…ELKP), 704 to 734 (DSVS…MGER), and 740 to 770 (EVEH…MRVK). The segment at 775 to 836 (VWGALLNSSR…KVPACSWIEV (62 aa)) is type E motif; degenerate.

The protein belongs to the PPR family. PCMP-E subfamily.

The sequence is that of Pentatricopeptide repeat-containing protein At2g39620 (PCMP-E33) from Arabidopsis thaliana (Mouse-ear cress).